Here is a 259-residue protein sequence, read N- to C-terminus: Polycomb group RING finger protein 1 (259 aa).

An RING-type zinc finger spans residues cysteine 45–asparagine 84.

Component of a PRC1-like complex.

The protein resides in the nucleus. Its function is as follows. Component of a Polycomb group (PcG) multiprotein PRC1-like complex, a complex class required to maintain the transcriptionally repressive state of many genes, including Hox genes, throughout development. PcG PRC1 complex acts via chromatin remodeling and modification of histones; it mediates monoubiquitination of histone H2A 'Lys-119', rendering chromatin heritably changed in its expressibility. The protein is Polycomb group RING finger protein 1 (pcgf1) of Xenopus laevis (African clawed frog).